Here is a 72-residue protein sequence, read N- to C-terminus: Translation initiation factor IF-1 (72 aa).

Residues Met1–Lys72 enclose the S1-like domain.

It belongs to the IF-1 family. As to quaternary structure, component of the 30S ribosomal translation pre-initiation complex which assembles on the 30S ribosome in the order IF-2 and IF-3, IF-1 and N-formylmethionyl-tRNA(fMet); mRNA recruitment can occur at any time during PIC assembly.

It is found in the cytoplasm. One of the essential components for the initiation of protein synthesis. Stabilizes the binding of IF-2 and IF-3 on the 30S subunit to which N-formylmethionyl-tRNA(fMet) subsequently binds. Helps modulate mRNA selection, yielding the 30S pre-initiation complex (PIC). Upon addition of the 50S ribosomal subunit IF-1, IF-2 and IF-3 are released leaving the mature 70S translation initiation complex. This is Translation initiation factor IF-1 from Ligilactobacillus salivarius (strain UCC118) (Lactobacillus salivarius).